The primary structure comprises 160 residues: Putative 4-hydroxy-4-methyl-2-oxoglutarate aldolase (160 aa).

Residues 78–81 (GDVI) and Arg100 contribute to the substrate site. Asp101 contacts a divalent metal cation.

It belongs to the class II aldolase/RraA-like family. As to quaternary structure, homotrimer. It depends on a divalent metal cation as a cofactor.

It carries out the reaction 4-hydroxy-4-methyl-2-oxoglutarate = 2 pyruvate. The enzyme catalyses oxaloacetate + H(+) = pyruvate + CO2. In terms of biological role, catalyzes the aldol cleavage of 4-hydroxy-4-methyl-2-oxoglutarate (HMG) into 2 molecules of pyruvate. Also contains a secondary oxaloacetate (OAA) decarboxylase activity due to the common pyruvate enolate transition state formed following C-C bond cleavage in the retro-aldol and decarboxylation reactions. The sequence is that of Putative 4-hydroxy-4-methyl-2-oxoglutarate aldolase from Mycolicibacterium vanbaalenii (strain DSM 7251 / JCM 13017 / BCRC 16820 / KCTC 9966 / NRRL B-24157 / PYR-1) (Mycobacterium vanbaalenii).